A 297-amino-acid polypeptide reads, in one-letter code: tRNA dimethylallyltransferase (297 aa).

8–15 (GATASGKS) serves as a coordination point for ATP. 10–15 (TASGKS) serves as a coordination point for substrate. Residues 33-36 (DSLS) are interaction with substrate tRNA.

The protein belongs to the IPP transferase family. In terms of assembly, monomer. It depends on Mg(2+) as a cofactor.

It catalyses the reaction adenosine(37) in tRNA + dimethylallyl diphosphate = N(6)-dimethylallyladenosine(37) in tRNA + diphosphate. Its function is as follows. Catalyzes the transfer of a dimethylallyl group onto the adenine at position 37 in tRNAs that read codons beginning with uridine, leading to the formation of N6-(dimethylallyl)adenosine (i(6)A). The chain is tRNA dimethylallyltransferase from Sulfurimonas denitrificans (strain ATCC 33889 / DSM 1251) (Thiomicrospira denitrificans (strain ATCC 33889 / DSM 1251)).